The following is a 253-amino-acid chain: MAEMSYRTALVTGASSGLGRGLALWLARRGVRVFAAGRRLPQLQALRDEAQAAGVTVEPVELDVTKADATLERIRALDAEAGGLDLVVANAGVGGTTNAKRLPWERVRGIIDTNVTGAAATLSAVLPQMVERKRGHLVGVSSLAGFRGLAGHAAYSASKAFLSTFMESLRVDLRGTGVRVTCIYPGFVKSELTATNNFPMPFLMETHDAVELMGKGIVRGDAEVSFPWQLAVPTRMAKVLPNPLFDAAARRLR.

10 to 34 is an NADP(+) binding site; the sequence is LVTGASSGLGRGLALWLARRGVRVF. Ser142 serves as a coordination point for substrate. Tyr155 (proton acceptor) is an active-site residue.

The protein belongs to the short-chain dehydrogenases/reductases (SDR) family.

This is an uncharacterized protein from Myxococcus xanthus (strain DK1622).